The following is a 531-amino-acid chain: METAIIAMETQLQQMLNNLQIAKNEAKEAQQKVAKLEVEISKFQSGIEMMKQFMPAITSEVCKQSVVDPSSNSEKMQEIASGKKPIAEGVSATSPEQTATGKDISKPLMADALPKSINSTNVETSPVQTVTGKDSSKPLMADALPKSINSVKTETGKKSWADIATEDEREPSSLVQLPLSGKKFYVLFNTPRKGIFSDWSQIAPLITGVKGAVHKSYPTMEAAKKALKDAEQMNGLKASSLEKLQPRVPAKKRQSIQEMVMARGGFKQNTPQNTYVFSPENRTMVNKKIFEWKKDEPNSEFYPIEIRGQTKIVLFPGADPVFAYTAYLMGYVKQIIIFEEFKFLSCFPRLFANCVEKFYNKIGRRETVINVRSSFPLLDETMKIRIPAINVAVMAMFNKQFEPFAEEIKLDIQLEDVLASIEGVYERTQKIDERSKLKVWYQSDSTILFGTSPKEIEDVDIRSLLRFEEMFKAMETGPLVNLQDEERKILCQKMQKYKGHSCQLCKSESSGPQTSEEGLQESEDEDFSVLV.

Disordered stretches follow at residues 80–101 and 505–531; these read ASGK…TATG and CKSE…SVLV. 2 stretches are compositionally biased toward polar residues: residues 91–100 and 505–517; these read SATSPEQTAT and CKSE…TSEE. Positions 518–531 are enriched in acidic residues; the sequence is GLQESEDEDFSVLV.

It belongs to the caulimoviridae viroplasmin family.

Its subcellular location is the host cytoplasm. Functionally, enhances the translation of downstream ORFs on polycistronic mRNAs. In Cestrum yellow leaf curling virus (CmYLCV), this protein is Transactivator/viroplasmin protein.